The sequence spans 334 residues: FAD:protein FMN transferase (334 aa).

The signal sequence occupies residues 1-16; sequence MRNWLVALASLLLLAG. Cys-17 carries N-palmitoyl cysteine lipidation. A lipid anchor (S-diacylglycerol cysteine) is attached at Cys-17. FAD-binding positions include Met-31, Tyr-69, 110 to 112, and Asp-168; that span reads ALD. Thr-171 provides a ligand contact to Mg(2+). FAD is bound by residues Lys-174 and Ile-259. Residues Asp-285 and Thr-289 each coordinate Mg(2+).

It belongs to the ApbE family. Mg(2+) is required as a cofactor.

The protein localises to the cell inner membrane. It carries out the reaction L-threonyl-[protein] + FAD = FMN-L-threonyl-[protein] + AMP + H(+). Its function is as follows. Flavin transferase that catalyzes the transfer of the FMN moiety of FAD and its covalent binding to the hydroxyl group of a threonine residue in a target flavoprotein such as NqrB and NqrC, two subunits of the NQR complex. Cannot use directly FMN instead of FAD as substrate. The polypeptide is FAD:protein FMN transferase (Vibrio cholerae serotype O1 (strain ATCC 39541 / Classical Ogawa 395 / O395)).